The primary structure comprises 442 residues: Proline--tRNA ligase (442 aa).

It belongs to the class-II aminoacyl-tRNA synthetase family. ProS type 2 subfamily. In terms of assembly, homodimer.

Its subcellular location is the cytoplasm. The enzyme catalyses tRNA(Pro) + L-proline + ATP = L-prolyl-tRNA(Pro) + AMP + diphosphate. Functionally, catalyzes the attachment of proline to tRNA(Pro) in a two-step reaction: proline is first activated by ATP to form Pro-AMP and then transferred to the acceptor end of tRNA(Pro). The polypeptide is Proline--tRNA ligase (Sinorhizobium medicae (strain WSM419) (Ensifer medicae)).